Reading from the N-terminus, the 293-residue chain is AM-toxin biosynthesis protein 14 (293 aa).

Transmembrane regions (helical) follow at residues 33–53 (SATASLPIGFSSLFLLTEVYI), 73–93 (IAVNTGLWICCLVLSIVALVL), 148–168 (GVLALVLTACLQCAAAGLCVW), 183–203 (LVPILHVGWGLHYTVFLLWIL), and 221–241 (VWCLLVAPLFISALVGATPLT).

The protein localises to the membrane. It functions in the pathway mycotoxin biosynthesis. In terms of biological role, part of the gene clusters that mediate the biosynthesis of AM-toxins, host-selective toxins (HSTs) causing Alternaria blotch on apple, a worldwide distributed disease. AM-toxins are cyclic depsipeptides containing the 3 residues 2-hydroxy-isovaleric acid (2-HIV), dehydroalanine, L-alanine which are common for all 3 AM-toxins I to III. The fourth precursor is L-alpha-amino-methoxyphenyl-valeric acid (L-Amv) for AM-toxin I, L-alpha-amino-phenyl-valeric acid (L-Apv) for AM-toxin II, and L-alpha-amino-hydroxyphenyl-valeric acid (L-Ahv) for AM-toxin III. AM-toxins have two target sites for affecting susceptible apple cells; they cause invagination of the plasma membrane and electrolyte loss and chloroplast disorganization. The non-ribosomal peptide synthetase AMT1 contains 4 catalytic modules and is responsible for activation of each residue in AM-toxin. The aldo-keto reductase AMT2 catalyzes the conversion of 2-keto-isovaleric acid (2-KIV) to 2-hydroxy-isovaleric acid (2-HIV), one of the precursor residues incorporated by AMT1 during AM-toxin biosynthesis, by reduction of its ketone to an alcohol. The cytochrome P450 monooxygenase AMT3 and the thioesterase AMT4 are also important for AM-toxin production, but their exact function within the AM-toxin biosynthesis are not known yet. Up to 21 proteins (including AMT1 to AMT4) are predicted to be involved in AM-toxin biosynthesis since their expression ishighly up-regulated in AM-toxin-producing cultures. In Alternaria alternata (Alternaria rot fungus), this protein is AM-toxin biosynthesis protein 14.